The chain runs to 1350 residues: ABC-type transporter MDR1 (1350 aa).

A compositionally biased stretch (basic and acidic residues) spans 1 to 11 (MDTVHEGHHGS). The disordered stretch occupies residues 1-84 (MDTVHEGHHG…DEGEDPFAHL (84 aa)). The span at 22 to 33 (VEVTNYEKTQLG) shows a compositional bias: polar residues. Positions 52–63 (KKHKSQKEKKHK) are enriched in basic residues. An ABC transmembrane type-1 1 domain is found at 121–411 (VLSALSSIIG…VAPNIQAFTT (291 aa)). 6 helical membrane-spanning segments follow: residues 124 to 144 (ALSS…FGGL), 170 to 190 (LYFL…TAGF), 243 to 263 (KVGL…VSFI), 271 to 291 (ILMS…GFIV), 350 to 370 (GSMI…AFWM), and 380 to 400 (IEVG…FALG). An ABC transporter 1 domain is found at 446 to 691 (IELRNIRHIY…QGAYYNLVEA (246 aa)). 481–488 (GESGSGKS) lines the ATP pocket. The segment covering 712–731 (KDQNLKHETTKGEQPEDGLK) has biased composition (basic and acidic residues). The tract at residues 712-734 (KDQNLKHETTKGEQPEDGLKLAR) is disordered. 6 helical membrane-spanning segments follow: residues 779 to 799 (IGII…VFFA), 830 to 850 (FMLA…FAVC), 903 to 923 (LGTI…SLAI), 929 to 949 (LVCI…FWML), 1014 to 1034 (ASQS…GTLI), and 1044 to 1064 (FFLC…IFSF). The ABC transmembrane type-1 2 domain occupies 779-1070 (IGIICSVITG…IFSFAPDMGK (292 aa)). Residues 1105–1343 (IEFRDVHFRY…RGRYWELVNL (239 aa)) enclose the ABC transporter 2 domain. Asparagine 1127 carries an N-linked (GlcNAc...) asparagine glycan. Residue 1140-1147 (GASGCGKS) participates in ATP binding.

The protein belongs to the ABC transporter superfamily. ABCB family. Multidrug resistance exporter (TC 3.A.1.201) subfamily.

Its subcellular location is the cell membrane. Functionally, ABC-type transporter that is involved in the secretion of liamocins, glycolipids (also called heavy oils) composed of a single mannitol or arabitol headgroup linked to either three, four or even six 3,5-dihydroxydecanoic ester tail-groups. This chain is ABC-type transporter MDR1, found in Aureobasidium melanogenum (Aureobasidium pullulans var. melanogenum).